Reading from the N-terminus, the 117-residue chain is uncharacterized protein (117 aa).

The next 3 helical transmembrane spans lie at 32–52, 56–76, and 87–107; these read VSSS…VTVV, VGVA…VTLL, and LSWC…SFFF.

It localises to the membrane. This is an uncharacterized protein from Saccharomyces cerevisiae (strain ATCC 204508 / S288c) (Baker's yeast).